The primary structure comprises 153 residues: D-aminoacyl-tRNA deacylase (153 aa).

A Gly-cisPro motif, important for rejection of L-amino acids motif is present at residues 137–138 (GP).

The protein belongs to the DTD family. As to quaternary structure, homodimer.

The protein localises to the cytoplasm. The enzyme catalyses glycyl-tRNA(Ala) + H2O = tRNA(Ala) + glycine + H(+). The catalysed reaction is a D-aminoacyl-tRNA + H2O = a tRNA + a D-alpha-amino acid + H(+). In terms of biological role, an aminoacyl-tRNA editing enzyme that deacylates mischarged D-aminoacyl-tRNAs. Also deacylates mischarged glycyl-tRNA(Ala), protecting cells against glycine mischarging by AlaRS. Acts via tRNA-based rather than protein-based catalysis; rejects L-amino acids rather than detecting D-amino acids in the active site. By recycling D-aminoacyl-tRNA to D-amino acids and free tRNA molecules, this enzyme counteracts the toxicity associated with the formation of D-aminoacyl-tRNA entities in vivo and helps enforce protein L-homochirality. The protein is D-aminoacyl-tRNA deacylase of Myxococcus xanthus (strain DK1622).